A 312-amino-acid chain; its full sequence is Bifunctional pinoresinol-lariciresinol reductase (312 aa).

NADP(+) contacts are provided by residues 11–17 (GGTGYIG), arginine 36, and lysine 45. Catalysis depends on lysine 138, which acts as the Proton acceptor. Position 142 (arginine 142) interacts with NADP(+). Histidine 270 is a substrate binding site.

It belongs to the NmrA-type oxidoreductase family. Isoflavone reductase subfamily. Dimer.

The catalysed reaction is (+)-lariciresinol + NADP(+) = (+)-pinoresinol + NADPH + H(+). The enzyme catalyses (-)-secoisolariciresinol + NADP(+) = (+)-lariciresinol + NADPH + H(+). Its function is as follows. Reductase involved in lignan biosynthesis. Catalyzes the enantioselective sequential conversion of (+)-pinoresinol into (+)-lariciresinol and of (+)-lariciresinol into (-)-secoisolariciresinol. Abstracts the 4R-hydride from the NADPH cofactor during catalysis. The sequence is that of Bifunctional pinoresinol-lariciresinol reductase from Thuja plicata (Western red-cedar).